Here is a 272-residue protein sequence, read N- to C-terminus: NADH-dependent L-xylulose reductase (272 aa).

2 residues coordinate NADP(+): Leu-24 and Asp-78. The active-site Proton donor is Ser-160. 3 residues coordinate NADP(+): Tyr-175, Lys-179, and Ile-208. Tyr-175 acts as the Proton acceptor in catalysis. Catalysis depends on Lys-179, which acts as the Lowers pKa of active site Tyr.

Belongs to the short-chain dehydrogenases/reductases (SDR) family.

The enzyme catalyses xylitol + NAD(+) = L-xylulose + NADH + H(+). It catalyses the reaction D-arabinitol + NAD(+) = D-ribulose + NADH + H(+). In terms of biological role, NADH-dependent L-xylulose reductase; part of the yeast pathway for L-arabinose catabolism. Reversibly converts L-xylulose to xylitol and D-ribulose to D-arabinitol. It has a much lower activity with D-xylulose. Sugar alcohols can serve as a substrate when the hydroxyl group of C-2 is in the L- and the hydroxyl group of the C-3 is in the D-configuration. Also seems to be specific for sugar alcohols that have not more than 5 carbons since no activity is observed with dulcitol (galactitol), which has the hydroxyl group of C-2 in L- and of C-3 in D-configuration, but is a six-carbon sugar alcohol. The sequence is that of NADH-dependent L-xylulose reductase from Ambrosiozyma monospora (Yeast).